The following is a 210-amino-acid chain: N-(5'-phosphoribosyl)anthranilate isomerase (210 aa).

It belongs to the TrpF family.

The enzyme catalyses N-(5-phospho-beta-D-ribosyl)anthranilate = 1-(2-carboxyphenylamino)-1-deoxy-D-ribulose 5-phosphate. Its pathway is amino-acid biosynthesis; L-tryptophan biosynthesis; L-tryptophan from chorismate: step 3/5. This chain is N-(5'-phosphoribosyl)anthranilate isomerase, found in Staphylococcus aureus (strain MRSA252).